A 209-amino-acid polypeptide reads, in one-letter code: Potassium-transporting ATPase KdpC subunit (209 aa).

The helical transmembrane segment at 11–31 (MILALTVLTGLAYPLAVTAVA) threads the bilayer. The disordered stretch occupies residues 188–209 (AQAPTPRQPEPGHPEPGRPEVR). Residues 197-209 (EPGHPEPGRPEVR) show a composition bias toward basic and acidic residues.

This sequence belongs to the KdpC family. In terms of assembly, the system is composed of three essential subunits: KdpA, KdpB and KdpC.

It localises to the cell inner membrane. Part of the high-affinity ATP-driven potassium transport (or Kdp) system, which catalyzes the hydrolysis of ATP coupled with the electrogenic transport of potassium into the cytoplasm. This subunit acts as a catalytic chaperone that increases the ATP-binding affinity of the ATP-hydrolyzing subunit KdpB by the formation of a transient KdpB/KdpC/ATP ternary complex. The chain is Potassium-transporting ATPase KdpC subunit from Rhodospirillum centenum (strain ATCC 51521 / SW).